A 250-amino-acid chain; its full sequence is NADH-quinone oxidoreductase subunit B 2 (250 aa).

Residues Cys41, Cys42, Cys107, and Cys137 each contribute to the [4Fe-4S] cluster site.

This sequence belongs to the complex I 20 kDa subunit family. NDH-1 is composed of 14 different subunits. Subunits NuoB, C, D, E, F, and G constitute the peripheral sector of the complex. [4Fe-4S] cluster serves as cofactor.

The protein resides in the cell membrane. It catalyses the reaction a quinone + NADH + 5 H(+)(in) = a quinol + NAD(+) + 4 H(+)(out). Functionally, NDH-1 shuttles electrons from NADH, via FMN and iron-sulfur (Fe-S) centers, to quinones in the respiratory chain. The immediate electron acceptor for the enzyme in this species is believed to be ubiquinone. Couples the redox reaction to proton translocation (for every two electrons transferred, four hydrogen ions are translocated across the cytoplasmic membrane), and thus conserves the redox energy in a proton gradient. This is NADH-quinone oxidoreductase subunit B 2 from Herpetosiphon aurantiacus (strain ATCC 23779 / DSM 785 / 114-95).